The sequence spans 59 residues: uncharacterized protein (59 aa).

Residues F7–A24 form a helical membrane-spanning segment.

It localises to the membrane. This is an uncharacterized protein from Rickettsia prowazekii (strain Madrid E).